Here is a 155-residue protein sequence, read N- to C-terminus: MKTYSAKPSEIEKKWWVIDAKNIVLGRLASRVANMLRGKHKPSFTPHLDCGDNIIIINAEHVKLTGKKANPRDGKIYYRYTGFPGGIKDTTAGKILSGKHPERVIKMAVKRMITRNALGAKQMSNLYVYANSDHPHMAQQPTVYDFAGQNPKNKK.

It belongs to the universal ribosomal protein uL13 family. As to quaternary structure, part of the 50S ribosomal subunit.

Functionally, this protein is one of the early assembly proteins of the 50S ribosomal subunit, although it is not seen to bind rRNA by itself. It is important during the early stages of 50S assembly. This chain is Large ribosomal subunit protein uL13, found in Rickettsia akari (strain Hartford).